The primary structure comprises 334 residues: Atypical chemokine receptor 1 (334 aa).

Topologically, residues 1–61 are extracellular; it reads MGNCLYPVET…CNLLDRSSLP (61 aa). N16, N26, and N32 each carry an N-linked (GlcNAc...) asparagine glycan. Intrachain disulfides connect C49–C274 and C127–C193. Residues 62–82 form a helical membrane-spanning segment; that stretch reads FFMLTSVLGMLASGSILFAIL. The Cytoplasmic portion of the chain corresponds to 83 to 93; sequence RPFFHWQICPS. A helical membrane pass occupies residues 94-114; the sequence is WPILAELAVGSALFSIAVPIL. Residues 115-127 lie on the Extracellular side of the membrane; the sequence is APGLHSAHSTALC. The chain crosses the membrane as a helical span at residues 128 to 151; the sequence is NLGYWVWYTSAFAQALLIGCYACL. Topologically, residues 152–164 are cytoplasmic; that stretch reads NPRLNIGQLRGFT. A helical transmembrane segment spans residues 165 to 185; sequence LGLSVGLWGAAALSGLPVALA. At 186 to 205 the chain is on the extracellular side; sequence SDVYNGFCTFPSSRDMEALK. A helical transmembrane segment spans residues 206–226; the sequence is YTHYAICFTIFTVLPLTLLAA. The Cytoplasmic segment spans residues 227–242; it reads KGLKIALSKGPGPWVS. A helical membrane pass occupies residues 243–263; sequence VLWIWFIFWWPHGMVLIFDAL. The Extracellular portion of the chain corresponds to 264–285; it reads VRSKTVLLYTCQSQKILDAMLN. The N-linked (GlcNAc...) asparagine glycan is linked to N285. The chain crosses the membrane as a helical span at residues 286–306; it reads VTEALSMLHCVATPLLLALFC. Over 307-334 the chain is Cytoplasmic; the sequence is HQTTRRSLSSLSLPTRQASQMDALAGKS.

The protein belongs to the G-protein coupled receptor 1 family. Atypical chemokine receptor subfamily. As to expression, expressed in liver and brain.

It localises to the early endosome. The protein resides in the recycling endosome. Its subcellular location is the membrane. In terms of biological role, atypical chemokine receptor that controls chemokine levels and localization via high-affinity chemokine binding that is uncoupled from classic ligand-driven signal transduction cascades, resulting instead in chemokine sequestration, degradation, or transcytosis. Also known as interceptor (internalizing receptor) or chemokine-scavenging receptor or chemokine decoy receptor. Has a promiscuous chemokine-binding profile, interacting with inflammatory chemokines of both the CXC and the CC subfamilies but not with homeostatic chemokines. Acts as a receptor for chemokines including CCL2, CCL5, CCL7, CCL11, CCL13, CCL14, CCL17, CXCL5, CXCL6, IL8/CXCL8, CXCL11, GRO, RANTES, MCP-1 and TARC. May regulate chemokine bioavailability and, consequently, leukocyte recruitment through two distinct mechanisms: when expressed in endothelial cells, it sustains the abluminal to luminal transcytosis of tissue-derived chemokines and their subsequent presentation to circulating leukocytes; when expressed in erythrocytes, serves as blood reservoir of cognate chemokines but also as a chemokine sink, buffering potential surges in plasma chemokine levels. Functionally, (Microbial infection) Acts as a receptor for the malaria parasite Plasmodium yoelii in mature erythrocytes but not reticulocytes. The polypeptide is Atypical chemokine receptor 1 (Ackr1) (Mus musculus (Mouse)).